The sequence spans 37 residues: Large ribosomal subunit protein bL36 (37 aa).

It belongs to the bacterial ribosomal protein bL36 family.

The chain is Large ribosomal subunit protein bL36 from Syntrophotalea carbinolica (strain DSM 2380 / NBRC 103641 / GraBd1) (Pelobacter carbinolicus).